Here is a 681-residue protein sequence, read N- to C-terminus: MSKHILVTSALPYANGSIHLGHILEAVQTDIWVRFQKLIGNECYFFCADDTHGTPIMIAAKKAGKTPESMIEEVQKEHYKDLTSFGVEYDNYYTTNSEENKKFSESIYLTLKKNGHIVARNIEQSYCEHDKMFLPDRFIKGTCPKCGAKDQYGDSCEVCGTSYSPKDLKDSYCSICGTTPVLRESKHLFFKLQDFQNQLKNWMEEGNRLNEGAQKKLQEWFTSGLQEWDISRDGPYFGFAIPEEENKYFYVWLDAPIGYMASSLNHLKDERKFNEFWKEGKGEIVHFIGKDILYFHGLFWPAMLMGSGYKAPSQLNVHGFLTVNGEKMSKSRGTFINASTFAKYLDVEHFRFYLACRLGSGMEDVDISFDDFVSRVNSDLIGNLVNLVSRVSTSILDKMDRKLGILSTEGKSLVSELLSKETEIREAYVSRNYSKVMRDITGLGDKVNKYVNDYAPWNLIKTDVEKAREVVTTSLNCAKILFTYLAPVTPKIVHSLADLFQIPNLSFLNLTETIENKVLGPYQMLSKRVEEKNITIMITETKETFEKSNPEKAKQDPSKSNTNEVKSATVSEDGFITIDELSKVELRVGLIKEANPVEGADKLLFVKVDLGEKGIKNVFAGIKASYTAEELVGKKVVVVANLKPRQMKFGLSEAMLLASGKDKTLSLFVPDRDASPGDLLK.

Residues 12–22 (PYANGSIHLGH) carry the 'HIGH' region motif. Zn(2+)-binding residues include Cys-143, Cys-146, Cys-156, and Cys-159. Positions 327 to 331 (KMSKS) match the 'KMSKS' region motif. Lys-330 provides a ligand contact to ATP. A compositionally biased stretch (basic and acidic residues) spans 545 to 557 (FEKSNPEKAKQDP). The interval 545 to 566 (FEKSNPEKAKQDPSKSNTNEVK) is disordered. The 102-residue stretch at 580–681 (ELSKVELRVG…RDASPGDLLK (102 aa)) folds into the tRNA-binding domain.

The protein belongs to the class-I aminoacyl-tRNA synthetase family. MetG type 1 subfamily. As to quaternary structure, homodimer. Zn(2+) is required as a cofactor.

It is found in the cytoplasm. The enzyme catalyses tRNA(Met) + L-methionine + ATP = L-methionyl-tRNA(Met) + AMP + diphosphate. Is required not only for elongation of protein synthesis but also for the initiation of all mRNA translation through initiator tRNA(fMet) aminoacylation. This chain is Methionine--tRNA ligase, found in Leptospira biflexa serovar Patoc (strain Patoc 1 / ATCC 23582 / Paris).